The primary structure comprises 451 residues: Cytochrome c biogenesis protein CcsB (451 aa).

3 helical membrane-spanning segments follow: residues 30-50 (LRLA…GTVI), 89-109 (TWWF…CTFT), and 175-195 (IGPI…IWGA).

It belongs to the Ccs1/CcsB family. May interact with CcsA.

The protein localises to the cellular thylakoid membrane. Required during biogenesis of c-type cytochromes (cytochrome c6 and cytochrome f) at the step of heme attachment. The polypeptide is Cytochrome c biogenesis protein CcsB (Crocosphaera subtropica (strain ATCC 51142 / BH68) (Cyanothece sp. (strain ATCC 51142))).